Here is a 513-residue protein sequence, read N- to C-terminus: ATP synthase subunit alpha (513 aa).

169–176 is a binding site for ATP; it reads GDRQIGKT.

Belongs to the ATPase alpha/beta chains family. As to quaternary structure, F-type ATPases have 2 components, CF(1) - the catalytic core - and CF(0) - the membrane proton channel. CF(1) has five subunits: alpha(3), beta(3), gamma(1), delta(1), epsilon(1). CF(0) has three main subunits: a(1), b(2) and c(9-12). The alpha and beta chains form an alternating ring which encloses part of the gamma chain. CF(1) is attached to CF(0) by a central stalk formed by the gamma and epsilon chains, while a peripheral stalk is formed by the delta and b chains.

Its subcellular location is the cell inner membrane. It carries out the reaction ATP + H2O + 4 H(+)(in) = ADP + phosphate + 5 H(+)(out). Functionally, produces ATP from ADP in the presence of a proton gradient across the membrane. The alpha chain is a regulatory subunit. The polypeptide is ATP synthase subunit alpha (Shewanella piezotolerans (strain WP3 / JCM 13877)).